Here is a 683-residue protein sequence, read N- to C-terminus: DNA-directed RNA polymerase subunit beta' (683 aa).

Positions 69, 71, 87, and 90 each coordinate Zn(2+). Mg(2+) contacts are provided by Asp489, Asp491, and Asp493.

Belongs to the RNA polymerase beta' chain family. RpoC1 subfamily. In terms of assembly, in plastids the minimal PEP RNA polymerase catalytic core is composed of four subunits: alpha, beta, beta', and beta''. When a (nuclear-encoded) sigma factor is associated with the core the holoenzyme is formed, which can initiate transcription. It depends on Mg(2+) as a cofactor. The cofactor is Zn(2+).

It is found in the plastid. The protein resides in the chloroplast. It catalyses the reaction RNA(n) + a ribonucleoside 5'-triphosphate = RNA(n+1) + diphosphate. DNA-dependent RNA polymerase catalyzes the transcription of DNA into RNA using the four ribonucleoside triphosphates as substrates. This chain is DNA-directed RNA polymerase subunit beta', found in Sorghum bicolor (Sorghum).